A 780-amino-acid chain; its full sequence is Copper-exporting P-type ATPase (780 aa).

Residues 2–67 (QRIQLNITGM…AVRRAALCTD (66 aa)) form the HMA domain. Residues Cys13 and Cys16 each coordinate Cu(+). The next 6 helical transmembrane spans lie at 89 to 109 (LAVA…FAVL), 114 to 134 (FPGW…WAAW), 153 to 173 (TLIS…VFGH), 185 to 205 (ALLG…VFVL), 348 to 368 (VFVP…LIAG), and 374 to 394 (VFSA…GLAT). Asp430 (4-aspartylphosphate intermediate) is an active-site residue. Transmembrane regions (helical) follow at residues 680 to 698 (FNMV…IAAA) and 704 to 722 (LVAG…SNSL).

Belongs to the cation transport ATPase (P-type) (TC 3.A.3) family. Type IB subfamily.

The protein localises to the cell membrane. It catalyses the reaction Cu(+)(in) + ATP + H2O = Cu(+)(out) + ADP + phosphate + H(+). Its function is as follows. Involved in copper export. In Mycobacterium leprae (strain TN), this protein is Copper-exporting P-type ATPase (ctpA).